Here is a 234-residue protein sequence, read N- to C-terminus: R-spondin-4 (234 aa).

The first 19 residues, 1–19 (MRAPLCLLLLVAHAVDMLA), serve as a signal peptide directing secretion. N-linked (GlcNAc...) asparagine glycosylation is present at N34. Disulfide bonds link C35-C41, C38-C47, C50-C69, C73-C88, C91-C98, C95-C104, C107-C118, C122-C135, C139-C181, C150-C157, and C190-C196. The FU repeat unit spans residues 85–128 (VNRCKKCGATCESCFSQDFCIRCKRQFYLYKGKCLPTCPPGTLA). Residues 138-197 (ECELGPWGGWSPCTHNGKTCGSAWGLESRVREAGRAGHEEAATCQVLSESRKCPIQRPCP) form the TSP type-1 domain. A disordered region spans residues 190–234 (CPIQRPCPGERSPGQKKGRKDRRPRKDRKLDRRLDVRPRQPGLQP). The span at 203 to 216 (GQKKGRKDRRPRKD) shows a compositional bias: basic residues. A compositionally biased stretch (basic and acidic residues) spans 217-227 (RKLDRRLDVRP).

It belongs to the R-spondin family. As to quaternary structure, binds heparin. Interacts with LGR4, LGR5 and LGR6. In terms of processing, tyr-112 may be phosphorylated; however as this position is probably extracellular, the vivo relevance is not proven.

Its subcellular location is the secreted. Functionally, activator of the canonical Wnt signaling pathway by acting as a ligand for LGR4-6 receptors. Upon binding to LGR4-6 (LGR4, LGR5 or LGR6), LGR4-6 associate with phosphorylated LRP6 and frizzled receptors that are activated by extracellular Wnt receptors, triggering the canonical Wnt signaling pathway to increase expression of target genes. Also regulates the canonical Wnt/beta-catenin-dependent pathway and non-canonical Wnt signaling by acting as an inhibitor of ZNRF3, an important regulator of the Wnt signaling pathway. This chain is R-spondin-4 (RSPO4), found in Homo sapiens (Human).